A 99-amino-acid polypeptide reads, in one-letter code: MKINHAAVAGTLESSDVMVRIAPIEDDQALDLQISSSVEKQFGDAIRATVLDVLNRYQVRGIQLIVDDKGALDCVLRARLETLLARAADLVSLPWEDRA.

An O-(phosphoribosyl dephospho-coenzyme A)serine modification is found at Ser-14.

Belongs to the CitD family. In terms of assembly, oligomer with a subunit composition of (alpha,beta,gamma)6.

It is found in the cytoplasm. In terms of biological role, covalent carrier of the coenzyme of citrate lyase. This Edwardsiella ictaluri (strain 93-146) protein is Citrate lyase acyl carrier protein.